We begin with the raw amino-acid sequence, 666 residues long: Probable potassium transport system protein Kup (666 aa).

12 helical membrane passes run 16 to 36, 58 to 78, 99 to 119, 141 to 161, 167 to 187, 221 to 241, 253 to 273, 292 to 312, 343 to 363, 373 to 393, 402 to 422, and 424 to 444; these read GFII…LYTM, ISLI…LVAL, TPWL…DGAL, IFQN…LLFA, TGVI…FLGI, IFIL…YSDL, WPFV…WILA, FTMH…QALI, TYIP…VLLF, YGLA…FFLI, VLLM…ASAV, and FMHG…IMTI.

Belongs to the HAK/KUP transporter (TC 2.A.72) family.

It localises to the cell membrane. It carries out the reaction K(+)(in) + H(+)(in) = K(+)(out) + H(+)(out). Functionally, transport of potassium into the cell. Likely operates as a K(+):H(+) symporter. This chain is Probable potassium transport system protein Kup, found in Streptococcus agalactiae serotype Ia (strain ATCC 27591 / A909 / CDC SS700).